The following is a 368-amino-acid chain: MSILEQVQPIETMLPERYYTMSTEDMEKRVREIKEKMGKMLFIPGHHYQKDEVVQFSDAAGDSLQLAQVAASNKDAKYIVFCGVHFMAETADMLTTDDQVVILPDMRAGCSMADMADIEQTERAWKELTKLFGDTMIPLTYVNSTAAIKAFCGRNGGATVTSSNAKQMVSWAFTQKERLVFLPDQHLGRNTAYDLGIPLDKMAVWDPHTDSLEYDGDIEEIQVILWKGHCSVHQNFTVKNIESIRKNHPDMNIIVHPECCYEVVAASDYAGSTKYIIDMIESAPSGSKWAIGTEMNLVNRIIQQHPDKEIVSLNPFMCPCLTMNRIDLPHLLWALETIERGEEINVISVDKQVTTEAVFALNRMLERV.

2 residues coordinate iminosuccinate: histidine 46 and serine 63. Cysteine 110 is a binding site for [4Fe-4S] cluster. Iminosuccinate-binding positions include 141–143 (YVN) and serine 162. Residue cysteine 230 participates in [4Fe-4S] cluster binding. Residues 256–258 (HPE) and threonine 273 each bind iminosuccinate. Cysteine 320 serves as a coordination point for [4Fe-4S] cluster.

The protein belongs to the quinolinate synthase family. Type 3 subfamily. [4Fe-4S] cluster is required as a cofactor.

It is found in the cytoplasm. The enzyme catalyses iminosuccinate + dihydroxyacetone phosphate = quinolinate + phosphate + 2 H2O + H(+). The protein operates within cofactor biosynthesis; NAD(+) biosynthesis; quinolinate from iminoaspartate: step 1/1. Catalyzes the condensation of iminoaspartate with dihydroxyacetone phosphate to form quinolinate. This chain is Quinolinate synthase, found in Bacillus cereus (strain B4264).